The sequence spans 639 residues: Protein DYAD (639 aa).

A compositionally biased stretch (basic and acidic residues) spans 201–226 (RHIDTRKNKEGEESSRVKDEVYKEEE). Positions 201–256 (RHIDTRKNKEGEESSRVKDEVYKEEEMEKEEDDDDGNEIGGTKQEAKEITNGNRKR) are disordered. Over residues 227–237 (MEKEEDDDDGN) the composition is skewed to acidic residues. A PI-PLC X-box domain is found at 351–498 (GKVAPGGQDR…RKMEEDMGWL (148 aa)). The disordered stretch occupies residues 536-561 (NKGNQITESPQNREKGRKHDQQERSP). The segment covering 546-558 (QNREKGRKHDQQE) has biased composition (basic and acidic residues).

In terms of tissue distribution, meiocytes (at protein level).

Its subcellular location is the nucleus. Its function is as follows. Required for fertility. Involved in chromatid cohesion establishment, in chromosome structure during male and female meiosis (e.g. the synapse formation between homologous chromosomes, the recombination, and the cohesion of both chromatid arm and centromere), and in axial element formation. Regulates the switch from mitosis to the reductional meiosis division of megaspores prior to the female gametogenesis (megasporogenesis). The polypeptide is Protein DYAD (DYAD) (Arabidopsis thaliana (Mouse-ear cress)).